Consider the following 444-residue polypeptide: Phosphoglucosamine mutase (444 aa).

Catalysis depends on S102, which acts as the Phosphoserine intermediate. Mg(2+) contacts are provided by S102, D241, D243, and D245. Position 102 is a phosphoserine (S102).

Belongs to the phosphohexose mutase family. It depends on Mg(2+) as a cofactor. Activated by phosphorylation.

It catalyses the reaction alpha-D-glucosamine 1-phosphate = D-glucosamine 6-phosphate. Its function is as follows. Catalyzes the conversion of glucosamine-6-phosphate to glucosamine-1-phosphate. This Mannheimia succiniciproducens (strain KCTC 0769BP / MBEL55E) protein is Phosphoglucosamine mutase.